Reading from the N-terminus, the 244-residue chain is 5-oxoprolinase subunit A (244 aa).

The protein belongs to the LamB/PxpA family. Forms a complex composed of PxpA, PxpB and PxpC.

The enzyme catalyses 5-oxo-L-proline + ATP + 2 H2O = L-glutamate + ADP + phosphate + H(+). Catalyzes the cleavage of 5-oxoproline to form L-glutamate coupled to the hydrolysis of ATP to ADP and inorganic phosphate. This Escherichia coli O157:H7 protein is 5-oxoprolinase subunit A.